The sequence spans 114 residues: NADH-ubiquinone oxidoreductase chain 3 (114 aa).

3 helical membrane passes run 1–21 (MIFY…MLFF), 55–75 (FFFV…ILPF), and 85–105 (MFVF…LYEF).

This sequence belongs to the complex I subunit 3 family.

It is found in the mitochondrion membrane. It carries out the reaction a ubiquinone + NADH + 5 H(+)(in) = a ubiquinol + NAD(+) + 4 H(+)(out). In terms of biological role, core subunit of the mitochondrial membrane respiratory chain NADH dehydrogenase (Complex I) that is believed to belong to the minimal assembly required for catalysis. Complex I functions in the transfer of electrons from NADH to the respiratory chain. The immediate electron acceptor for the enzyme is believed to be ubiquinone. This Rhipicephalus sanguineus (Brown dog tick) protein is NADH-ubiquinone oxidoreductase chain 3 (ND3).